The following is a 96-amino-acid chain: Probable RNA-binding protein YqeI (96 aa).

The region spanning 1–96 is the CRM domain; sequence MLTGKQKRFL…SKENKQIELP (96 aa).

The polypeptide is Probable RNA-binding protein YqeI (yqeI) (Bacillus subtilis (strain 168)).